The primary structure comprises 662 residues: Polyunsaturated fatty acid lipoxygenase ALOX15 (662 aa).

A PLAT domain is found at 2 to 114 (GLYRIRVSTG…VLSLPEGTGR (113 aa)). Residues 115-662 (TVGEDPQGLF…PSVVENSVAI (548 aa)) enclose the Lipoxygenase domain. Residues histidine 360, histidine 365, histidine 540, histidine 544, and isoleucine 662 each coordinate Fe cation.

The protein belongs to the lipoxygenase family. Interacts with PEBP1; in response to IL13/interleukin-13, prevents the interaction of PEBP1 with RAF1 to activate the ERK signaling cascade. Requires Fe cation as cofactor. Detected in monocytes and eosinophils (at protein level). Expressed in airway epithelial cells.

The protein resides in the cytoplasm. It localises to the cytosol. It is found in the cell membrane. Its subcellular location is the lipid droplet. It catalyses the reaction (5Z,8Z,11Z,14Z)-eicosatetraenoate + O2 = (12S)-hydroperoxy-(5Z,8Z,10E,14Z)-eicosatetraenoate. It carries out the reaction (5Z,8Z,11Z,14Z)-eicosatetraenoate + O2 = (15S)-hydroperoxy-(5Z,8Z,11Z,13E)-eicosatetraenoate. The enzyme catalyses (9Z,12Z)-octadecadienoate + O2 = (13S)-hydroperoxy-(9Z,11E)-octadecadienoate. The catalysed reaction is (5Z,8Z,11Z,14Z)-eicosatetraenoate + 2 O2 = (14R,15S)-dihydroperoxy-(5Z,8Z,10E,12E)-eicosatetraenoate. It catalyses the reaction (5Z,8Z,11Z,14Z)-eicosatetraenoate + 2 O2 = (8S,15S)-dihydroperoxy-(5Z,9E,11Z,13E)-eicosatetraenoate. It carries out the reaction (14S,15R)-epoxy-(5Z,8Z,11Z)-eicosatrienoate + O2 = (8S)-hydroperoxy-(14S,15R)-epoxy-(5Z,9E,11Z)-eicosatrienoate. The enzyme catalyses (14S,15R)-epoxy-(5Z,8Z,11Z)-eicosatrienoate + O2 = (12S)-hydroperoxy-(14S,15R)-epoxy-(5Z,8Z,10E)-eicosatrienoate. The catalysed reaction is (14R,15S)-epoxy-(5Z,8Z,11Z)-eicosatrienoate + O2 = (5S)-hydroperoxy-(14R,15S)-epoxy-(6E,8Z,11Z)-eicosatrienoate. It catalyses the reaction (14R,15S)-epoxy-(5Z,8Z,11Z)-eicosatrienoate + O2 = (12S)-hydroperoxy-(14R,15S)-epoxy-(5Z,8Z,10E)-eicosatrienoate. It carries out the reaction (15R)-hydroperoxy-(5Z,8Z,11Z,13E)-eicosatetraenoate = 15-oxo-(5Z,8Z,11Z,13E)-eicosatetraenoate + H2O. The enzyme catalyses (15S)-hydroperoxy-(5Z,8Z,11Z,13E)-eicosatetraenoate = (14S,15S)-epoxy-(5Z,8Z,10E,12E)-eicosatetraenoate + H2O. The catalysed reaction is (12S)-hydroperoxy-(5Z,8Z,10E,14Z)-eicosatetraenoate = (8S)-hydroxy-(11S,12S)-epoxy-(5Z,9E,14Z)-eicosatrienoate. It catalyses the reaction (4Z,7Z,10Z,13Z,16Z,19Z)-docosahexaenoate + O2 = (14S)-hydroperoxy-(4Z,7Z,10Z,12E,16Z,19Z)-docosahexaenoate. It carries out the reaction (4Z,7Z,10Z,13Z,16Z,19Z)-docosahexaenoate + O2 = (17S)-hydroperoxy-(4Z,7Z,10Z,13Z,15E,19Z)-docosahexaenoate. The enzyme catalyses (7S)-hydroperoxy-(4Z,8E,10Z,13Z,16Z,19Z)-docosahexaenoate + O2 = (7S,14S)-dihydroperoxy-(4Z,8E,10Z,12E,16Z,19Z)-docosahexaenoate. The catalysed reaction is (7S)-hydroperoxy-(4Z,8E,10Z,13Z,16Z,19Z)-docosahexaenoate + O2 = (7S,17S)-dihydroperoxy-(4Z,8E,10Z,13Z,15E,19Z)-docosahexaenoate. It catalyses the reaction (4Z,7Z,10Z,13Z,16Z,19Z)-docosahexaenoate + O2 = (11S)-hydroperoxy-(4Z,7Z,9E,13Z,16Z,19Z)-docosahexaenoate. It carries out the reaction (7Z,10Z,13Z,16Z,19Z)-docosapentaenoate + O2 = 14-hydroperoxy-(7Z,10Z,12E,16Z,19Z)-docosapentaenoate. The enzyme catalyses (4Z,7Z,10Z,13Z,16Z)-docosapentaenoate + O2 = 14-hydroperoxy-(4Z,7Z,10Z,12E,16Z)-docosapentaenoate. The catalysed reaction is N-(5Z,8Z,11Z,14Z)-eicosatetraenoyl-taurine + O2 = N-(12S)-hydroperoxy-(5Z,8Z,10E,14Z)-eicosatetraenoyl-taurine. It catalyses the reaction N-(5Z,8Z,11Z,14Z)-eicosatetraenoyl-gamma-aminobutanoate + O2 = N-(12S)-hydroperoxy-(5Z,8Z,10E,14Z)-eicosatetraenoyl-gamma-aminobutanoate. It carries out the reaction N-(5Z,8Z,11Z,14Z)-eicosatetraenoyl-glycine + O2 = N-(12S)-hydroperoxy-(5Z,8Z,10E,14Z)-eicosatetraenoyl-glycine. The enzyme catalyses N-(5Z,8Z,11Z,14Z)-eicosatetraenoyl-L-alanine + O2 = N-(12S)-hydroperoxy-(5Z,8Z,10E,14Z)-eicosatetraenoyl-alanine. The catalysed reaction is N-(5Z,8Z,11Z,14Z)-eicosatetraenoyl-taurine + O2 = N-(15S)-hydroperoxy-(5Z,8Z,11Z,13E)-eicosatetraenoyl-taurine. It catalyses the reaction N-(5Z,8Z,11Z,14Z)-eicosatetraenoyl-gamma-aminobutanoate + O2 = N-(15S)-hydroperoxy-(5Z,8Z,11Z,13E)-eicosatetraenoyl-gamma-aminobutanoate. It carries out the reaction N-(5Z,8Z,11Z,14Z)-eicosatetraenoyl-glycine + O2 = N-(15S)-hydroperoxy-(5Z,8Z,11Z,13E)-eicosatetraenoyl-glycine. The enzyme catalyses N-(5Z,8Z,11Z,14Z)-eicosatetraenoyl-L-alanine + O2 = N-(15S)-hydroperoxy-(5Z,8Z,11Z,13E)-eicosatetraenoyl-alanine. It participates in lipid metabolism; hydroperoxy eicosatetraenoic acid biosynthesis. Its activity is regulated as follows. Activity is increased by binding phosphatidylinositol phosphates, especially phosphatidylinositol 3,4-bisphosphate and phosphatidylinositol 4,5-bisphosphate. Inactivated at 37 degrees Celsius by (13S)-hydroperoxy-(9Z,11E)-octadecadienoate. In terms of biological role, non-heme iron-containing dioxygenase that catalyzes the stereo-specific peroxidation of free and esterified polyunsaturated fatty acids generating a spectrum of bioactive lipid mediators. It inserts peroxyl groups at C12 or C15 of arachidonate ((5Z,8Z,11Z,14Z)-eicosatetraenoate) producing both 12-hydroperoxyeicosatetraenoate/12-HPETE and 15-hydroperoxyeicosatetraenoate/15-HPETE. It may then act on 12-HPETE to produce hepoxilins, which may show pro-inflammatory properties. Can also peroxidize linoleate ((9Z,12Z)-octadecadienoate) to 13-hydroperoxyoctadecadienoate/13-HPODE. May participate in the sequential oxidations of DHA ((4Z,7Z,10Z,13Z,16Z,19Z)-docosahexaenoate) to generate specialized pro-resolving mediators (SPMs)like resolvin D5 ((7S,17S)-diHPDHA) and (7S,14S)-diHPDHA, that actively down-regulate the immune response and have anti-aggregation properties with platelets. Can convert epoxy fatty acids to hydroperoxy-epoxides derivatives followed by an intramolecular nucleophilic substitution leading to the formation of monocyclic endoperoxides. Plays an important role during the maintenance of self-tolerance by peroxidizing membrane-bound phosphatidylethanolamine which can then signal the sorting process for clearance of apoptotic cells during inflammation and prevent an autoimmune response. In addition to its role in the immune and inflammatory responses, this enzyme may play a role in epithelial wound healing in the cornea through production of lipoxin A4 (LXA(4)) and docosahexaenoic acid-derived neuroprotectin D1 (NPD1; 10R,17S-HDHA), both lipid autacoids exhibit anti-inflammatory and neuroprotective properties. Furthermore, it may regulate actin polymerization which is crucial for several biological processes such as the phagocytosis of apoptotic cells. It is also implicated in the generation of endogenous ligands for peroxisome proliferator activated receptor (PPAR-gamma), hence modulating macrophage development and function. It may also exert a negative effect on skeletal development by regulating bone mass through this pathway. As well as participates in ER stress and downstream inflammation in adipocytes, pancreatic islets, and liver. Finally, it is also involved in the cellular response to IL13/interleukin-13. The chain is Polyunsaturated fatty acid lipoxygenase ALOX15 from Homo sapiens (Human).